A 120-amino-acid polypeptide reads, in one-letter code: Large ribosomal subunit protein uL18 (120 aa).

Belongs to the universal ribosomal protein uL18 family. As to quaternary structure, part of the 50S ribosomal subunit; part of the 5S rRNA/L5/L18/L25 subcomplex. Contacts the 5S and 23S rRNAs.

This is one of the proteins that bind and probably mediate the attachment of the 5S RNA into the large ribosomal subunit, where it forms part of the central protuberance. This is Large ribosomal subunit protein uL18 from Chloroflexus aurantiacus (strain ATCC 29364 / DSM 637 / Y-400-fl).